A 79-amino-acid chain; its full sequence is Sec-independent protein translocase protein TatA (79 aa).

Residues M1 to T21 traverse the membrane as a helical segment. Residues K43 to S63 form a disordered region. Residues D51–S63 are compositionally biased toward low complexity.

It belongs to the TatA/E family. The Tat system comprises two distinct complexes: a TatABC complex, containing multiple copies of TatA, TatB and TatC subunits, and a separate TatA complex, containing only TatA subunits. Substrates initially bind to the TatABC complex, which probably triggers association of the separate TatA complex to form the active translocon.

The protein localises to the cell inner membrane. In terms of biological role, part of the twin-arginine translocation (Tat) system that transports large folded proteins containing a characteristic twin-arginine motif in their signal peptide across membranes. TatA could form the protein-conducting channel of the Tat system. This is Sec-independent protein translocase protein TatA from Albidiferax ferrireducens (strain ATCC BAA-621 / DSM 15236 / T118) (Rhodoferax ferrireducens).